We begin with the raw amino-acid sequence, 68 residues long: Tau-scoloptoxin(04)-Ssm1b (68 aa).

Residues 1–25 form the signal peptide; sequence MLKSFCILSVFMVLFLAKFPDLCSG. A propeptide spanning residues 26–36 is cleaved from the precursor; it reads EEISPLKIVVR. 2 disulfide bridges follow: cysteine 45–cysteine 56 and cysteine 50–cysteine 63. The interval 55–67 is highly charged C-terminal region, binds to TRPV1 channel; that stretch reads RCSIVDKQCIKKE.

Belongs to the scoloptoxin-04 family. In terms of tissue distribution, expressed by the venom gland.

The protein localises to the secreted. Its function is as follows. Extremely potent agonist and potentiator of TRPV1 (EC(50)=470-521.5 nM (mouse)). It strongly promotes the heat activation process by downshifting the activation threshold temperature. It preferably binds to the activated channel and promotes its opening. Holding the channel closed by cooling prevents binding of this toxin, leaving it ineffective. The toxin binds to the charge-rich outer pore region of the channel where it directly interacts with the pore helix and turret, two adjacent structural elements known to be critical for activation gating of TRPV1. In comparison with Sm1b, induces a TRPV1 desensitization with slower kinetics (20 seconds). In vivo, induces pain in mice after intraplantar injection. Potent agonist and probable potentiator of TRPV1 (EC(50)=38.35 uM (mouse)). Also binds to the outer pore region of TRPV1. In comparison with Sm1a, induces a TRPV1 desensitization with faster kinetics (2 seconds) and leads to a more complete TRPV1 desensitization. Desensitization is achieved by reducing both the open probability and the single-channel conductance upon prolonged exposure. This Scolopendra mutilans (Chinese red-headed centipede) protein is Tau-scoloptoxin(04)-Ssm1b.